Consider the following 105-residue polypeptide: Thioredoxin (105 aa).

The 104-residue stretch at 2–105 folds into the Thioredoxin domain; sequence VKQIDSKDAF…KLEATINEFV (104 aa). N6-acetyllysine is present on K3. K8 carries the post-translational modification N6-succinyllysine. Catalysis depends on nucleophile residues C32 and C35. A disulfide bridge connects residues C32 and C35. N6-acetyllysine is present on K39. 2 positions are modified to S-nitrosocysteine: C62 and C69. C73 is modified (S-nitrosocysteine; alternate). K94 carries the N6-acetyllysine; alternate modification. K94 carries the N6-succinyllysine; alternate modification.

It belongs to the thioredoxin family. In terms of assembly, homodimer; disulfide-linked. Interacts with TXNIP through the redox-active site. Interacts with MAP3K5 and CASP3. Interacts with APEX1; the interaction stimulates the FOS/JUN AP-1 DNA-binding activity in a redox-dependent manner. In the fully reduced protein, both Cys-69 and Cys-73 are nitrosylated in response to nitric oxide (NO). When two disulfide bonds are present in the protein, only Cys-73 is nitrosylated. Cys-73 can serve as donor for nitrosylation of target proteins.

The protein localises to the nucleus. Its subcellular location is the cytoplasm. It is found in the secreted. Participates in various redox reactions through the reversible oxidation of its active center dithiol to a disulfide and catalyzes dithiol-disulfide exchange reactions. Plays a role in the reversible S-nitrosylation of cysteine residues in target proteins, and thereby contributes to the response to intracellular nitric oxide. Nitrosylates the active site Cys of CASP3 in response to nitric oxide (NO), and thereby inhibits caspase-3 activity. Induces the FOS/JUN AP-1 DNA binding activity in ionizing radiation (IR) cells through its oxidation/reduction status and stimulates AP-1 transcriptional activity. The polypeptide is Thioredoxin (TXN) (Callithrix jacchus (White-tufted-ear marmoset)).